The chain runs to 694 residues: Elongation factor G (694 aa).

Residues 9–288 (DAIRNIGIMA…VIVKWLPSPL (280 aa)) enclose the tr-type G domain. Residues 18–25 (AHIDAGKT), 82–86 (DTPGH), and 136–139 (NKMD) each bind GTP.

The protein belongs to the TRAFAC class translation factor GTPase superfamily. Classic translation factor GTPase family. EF-G/EF-2 subfamily.

Its subcellular location is the cytoplasm. Its function is as follows. Catalyzes the GTP-dependent ribosomal translocation step during translation elongation. During this step, the ribosome changes from the pre-translocational (PRE) to the post-translocational (POST) state as the newly formed A-site-bound peptidyl-tRNA and P-site-bound deacylated tRNA move to the P and E sites, respectively. Catalyzes the coordinated movement of the two tRNA molecules, the mRNA and conformational changes in the ribosome. The chain is Elongation factor G from Chlamydia trachomatis serovar A (strain ATCC VR-571B / DSM 19440 / HAR-13).